Reading from the N-terminus, the 743-residue chain is Threonine synthase-like 1 (743 aa).

The residue at position 281 (K281) is an N6-acetyllysine. Residue K351 is modified to N6-(pyridoxal phosphate)lysine.

It belongs to the threonine synthase family. Requires pyridoxal 5'-phosphate as cofactor.

This Pongo abelii (Sumatran orangutan) protein is Threonine synthase-like 1 (THNSL1).